The following is a 655-amino-acid chain: p-hydroxybenzoic acid efflux pump subunit AaeB (655 aa).

The next 11 membrane-spanning stretches (helical) occupy residues 13–33, 38–58, 69–89, 93–113, 121–141, 152–172, 370–390, 407–427, 431–451, 459–479, and 482–502; these read FAVKLACAIVLALFIGFHFQL, WAVLTAAIVAAGPAFAAGGEP, LRIIGTFIGCIAALIIIISMI, LLMILVCCVWAGFCTWISSLV, WGLSGYTALIIVITIQTEPLL, EIVIGIGCAILADLLFSPRSI, LFWLWTGWTSGNGAMVMIAVV, FIYGTLAALPLGLLYFLVIIP, QSMLLLCLSLAVLGFFIGIEV, MGALASTINIIVLDNPMTFHF, and FLDSALGQIVGCMLAFIVILL.

Belongs to the aromatic acid exporter ArAE (TC 2.A.85) family.

Its subcellular location is the cell inner membrane. In terms of biological role, forms an efflux pump with AaeA. Could function as a metabolic relief valve, allowing to eliminate certain compounds when they accumulate to high levels in the cell. The sequence is that of p-hydroxybenzoic acid efflux pump subunit AaeB from Salmonella agona (strain SL483).